We begin with the raw amino-acid sequence, 174 residues long: Gamma-crystallin A (174 aa).

Beta/gamma crystallin 'Greek key' domains are found at residues glycine 2–serine 40 and glycine 41–proline 83. The segment at tyrosine 84–serine 87 is connecting peptide. Beta/gamma crystallin 'Greek key' domains follow at residues histidine 88–glutamate 128 and glycine 129–methionine 171.

Belongs to the beta/gamma-crystallin family.

Crystallins are the dominant structural components of the vertebrate eye lens. The sequence is that of Gamma-crystallin A (Cryga) from Mus musculus (Mouse).